The following is a 402-amino-acid chain: Phosphoribulokinase, chloroplastic (402 aa).

The N-terminal 51 residues, 1 to 51 (MAVCTVYTIPTTTHLGSSFNQNNKQVFFNYKRSSSSNNTLFTTRPSYVITC), are a transit peptide targeting the chloroplast. A disulfide bridge connects residues Cys-67 and Cys-106.

This sequence belongs to the phosphoribulokinase family.

Its subcellular location is the plastid. The protein resides in the chloroplast. The enzyme catalyses D-ribulose 5-phosphate + ATP = D-ribulose 1,5-bisphosphate + ADP + H(+). Its pathway is carbohydrate biosynthesis; Calvin cycle. Light regulated via thioredoxin by reversible oxidation/reduction of sulfhydryl/disulfide groups. The protein is Phosphoribulokinase, chloroplastic of Spinacia oleracea (Spinach).